The following is a 246-amino-acid chain: Orotidine 5'-phosphate decarboxylase (246 aa).

Substrate-binding positions include Asp22, Lys44, 71–80, Thr130, Arg191, Gln201, Gly221, and Arg222; that span reads DLKYHDIPHT. Lys73 acts as the Proton donor in catalysis.

The protein belongs to the OMP decarboxylase family. Type 1 subfamily. Homodimer.

The enzyme catalyses orotidine 5'-phosphate + H(+) = UMP + CO2. It participates in pyrimidine metabolism; UMP biosynthesis via de novo pathway; UMP from orotate: step 2/2. Its function is as follows. Catalyzes the decarboxylation of orotidine 5'-monophosphate (OMP) to uridine 5'-monophosphate (UMP). In Neisseria gonorrhoeae (strain ATCC 700825 / FA 1090), this protein is Orotidine 5'-phosphate decarboxylase.